The primary structure comprises 302 residues: Nucleotide-binding protein BceJ2315_08000 (302 aa).

8-15 (GISGSGKS) serves as a coordination point for ATP. 57–60 (DARS) contributes to the GTP binding site.

Belongs to the RapZ-like family.

Its function is as follows. Displays ATPase and GTPase activities. This is Nucleotide-binding protein BceJ2315_08000 from Burkholderia cenocepacia (strain ATCC BAA-245 / DSM 16553 / LMG 16656 / NCTC 13227 / J2315 / CF5610) (Burkholderia cepacia (strain J2315)).